Reading from the N-terminus, the 278-residue chain is Potassium/proton antiporter CemA (278 aa).

The next 4 membrane-spanning stretches (helical) occupy residues 60–80, 155–175, 201–221, and 239–259; these read YLLL…SFVF, AMKN…LIVT, FLII…GWEV, and IFLF…YWIF.

The protein belongs to the CemA family.

The protein resides in the plastid. Its subcellular location is the chloroplast inner membrane. It catalyses the reaction K(+)(in) + H(+)(out) = K(+)(out) + H(+)(in). In terms of biological role, contributes to K(+)/H(+) antiport activity by supporting proton efflux to control proton extrusion and homeostasis in chloroplasts in a light-dependent manner to modulate photosynthesis. Prevents excessive induction of non-photochemical quenching (NPQ) under continuous-light conditions. Indirectly promotes efficient inorganic carbon uptake into chloroplasts. This Rhodomonas salina (Cryptomonas salina) protein is Potassium/proton antiporter CemA.